A 350-amino-acid polypeptide reads, in one-letter code: Fe(2+) transport protein 2 (350 aa).

An N-terminal signal peptide occupies residues 1–21 (MATTKLVYILLILFTFTVSPA). The Extracellular segment spans residues 22-47 (ISTAPEHCDSGFDNPCINKAKALPLK). The helical transmembrane segment at 48 to 68 (IVAIVAILTTSLIGVTSPLFS) threads the bilayer. Residues 69 to 80 (RYISFLRPDGNG) lie on the Cytoplasmic side of the membrane. A helical transmembrane segment spans residues 81–101 (FMIVKCFSSGIILGTGFMHVL). The Extracellular portion of the chain corresponds to 102 to 120 (PDSFEMLSSKCLSDNPWHK). Residues 121 to 141 (FPFAGFVAMMSGLVTLAIDSI) traverse the membrane as a helical segment. At 142-195 (TTSLYTGKNSVGPVPDEEYGIDQEKAIHMVGHNHSHGHGVVLATKDDGQLLRYQ) the chain is on the cytoplasmic side. A helical membrane pass occupies residues 196–216 (VIAMVLEVGILFHSVVIGLSL). The Extracellular segment spans residues 217 to 227 (GATNDSCTIKG). Residues 228-248 (LIIALCFHHLFEGIGLGGCIL) traverse the membrane as a helical segment. Residues 249–257 (QADFTNVKK) lie on the Cytoplasmic side of the membrane. A helical membrane pass occupies residues 258 to 278 (FLMAFFFTGTTPCGIFLGIAL). Residues 279-289 (SSIYRDNSPTA) are Extracellular-facing. The helical transmembrane segment at 290 to 310 (LITIGLLNACSAGMLIYMALV) threads the bilayer. Residues 311–329 (DLLATEFMGSMLQGSIKLQ) lie on the Cytoplasmic side of the membrane. The chain crosses the membrane as a helical span at residues 330–350 (IKCFTAALLGCAVMSVVAVWA).

Belongs to the ZIP transporter (TC 2.A.5) family. Expressed in the external cell layers of the root subapical zone.

Its subcellular location is the cell membrane. In terms of biological role, high-affinity iron transporter that mediates under iron-deficiency the iron uptake from the rhizosphere across the plasma membrane in the root epidermal layer. Could also be capable of transporting zinc ions. The protein is Fe(2+) transport protein 2 (IRT2) of Arabidopsis thaliana (Mouse-ear cress).